Here is a 396-residue protein sequence, read N- to C-terminus: Phosphopentomutase (396 aa).

Mn(2+) contacts are provided by Asp-14, Asp-286, His-291, Asp-327, His-328, and His-339.

The protein belongs to the phosphopentomutase family. Requires Mn(2+) as cofactor.

It localises to the cytoplasm. The catalysed reaction is 2-deoxy-alpha-D-ribose 1-phosphate = 2-deoxy-D-ribose 5-phosphate. The enzyme catalyses alpha-D-ribose 1-phosphate = D-ribose 5-phosphate. The protein operates within carbohydrate degradation; 2-deoxy-D-ribose 1-phosphate degradation; D-glyceraldehyde 3-phosphate and acetaldehyde from 2-deoxy-alpha-D-ribose 1-phosphate: step 1/2. In terms of biological role, isomerase that catalyzes the conversion of deoxy-ribose 1-phosphate (dRib-1-P) and ribose 1-phosphate (Rib-1-P) to deoxy-ribose 5-phosphate (dRib-5-P) and ribose 5-phosphate (Rib-5-P), respectively. The polypeptide is Phosphopentomutase (Staphylococcus carnosus (strain TM300)).